Consider the following 181-residue polypeptide: Adenylate kinase (181 aa).

Position 10 to 15 (Gly-10 to Thr-15) interacts with ATP. The interval Ser-30–Val-59 is NMP. AMP is bound by residues Thr-31, Arg-36, Lys-57–Val-59, Gly-85–Arg-88, and Gln-92. The interval Ser-126–Asp-132 is LID. Arg-127 contributes to the ATP binding site. AMP contacts are provided by Arg-129 and Arg-140. Residue Gly-166 coordinates ATP.

Belongs to the adenylate kinase family. Monomer.

Its subcellular location is the cytoplasm. It catalyses the reaction AMP + ATP = 2 ADP. It participates in purine metabolism; AMP biosynthesis via salvage pathway; AMP from ADP: step 1/1. Its function is as follows. Catalyzes the reversible transfer of the terminal phosphate group between ATP and AMP. Plays an important role in cellular energy homeostasis and in adenine nucleotide metabolism. The protein is Adenylate kinase of Corynebacterium glutamicum (strain R).